Reading from the N-terminus, the 502-residue chain is Maturase K (502 aa).

Belongs to the intron maturase 2 family. MatK subfamily.

Its subcellular location is the plastid. The protein localises to the chloroplast. Usually encoded in the trnK tRNA gene intron. Probably assists in splicing its own and other chloroplast group II introns. Binds its homologous trnK precursor transcript. This chain is Maturase K, found in Sinapis alba (White mustard).